The following is a 280-amino-acid chain: MLVKNLIIYAVSDSVGETAQQVAKACMSQFYVNETYEIKRFPYMINKGVLLETLENAKAENALIVYTLVDEELCSIVERYCEREGLSCIDLMTDILREISKRTGRKPKREAGIIRKLDESYFKRVEAIEFAVKYDDGKDPRGVLQADIILVGISRTSKTPLSMYLANKNIKVANVPLVPEIPIPKEVFEIDTKKIIGLTNSPEKLNEIRTQRLKALGLSSKANYANLERILQELDYSEEIMKRIGCPVINVSNKAIEETAGIILDIMKENGLKIYKEIEI.

Residue 152-159 participates in ADP binding; it reads GISRTSKT.

The protein belongs to the pyruvate, phosphate/water dikinase regulatory protein family. PDRP subfamily.

It carries out the reaction N(tele)-phospho-L-histidyl/L-threonyl-[pyruvate, phosphate dikinase] + ADP = N(tele)-phospho-L-histidyl/O-phospho-L-threonyl-[pyruvate, phosphate dikinase] + AMP + H(+). The catalysed reaction is N(tele)-phospho-L-histidyl/O-phospho-L-threonyl-[pyruvate, phosphate dikinase] + phosphate + H(+) = N(tele)-phospho-L-histidyl/L-threonyl-[pyruvate, phosphate dikinase] + diphosphate. Functionally, bifunctional serine/threonine kinase and phosphorylase involved in the regulation of the pyruvate, phosphate dikinase (PPDK) by catalyzing its phosphorylation/dephosphorylation. In Clostridioides difficile (strain 630) (Peptoclostridium difficile), this protein is Putative pyruvate, phosphate dikinase regulatory protein.